A 186-amino-acid chain; its full sequence is Large ribosomal subunit protein uL5 (186 aa).

It belongs to the universal ribosomal protein uL5 family. In terms of assembly, part of the 50S ribosomal subunit; part of the 5S rRNA/L5/L18/L25 subcomplex. Contacts the 5S rRNA and the P site tRNA. Forms a bridge to the 30S subunit in the 70S ribosome.

In terms of biological role, this is one of the proteins that bind and probably mediate the attachment of the 5S RNA into the large ribosomal subunit, where it forms part of the central protuberance. In the 70S ribosome it contacts protein S13 of the 30S subunit (bridge B1b), connecting the 2 subunits; this bridge is implicated in subunit movement. Contacts the P site tRNA; the 5S rRNA and some of its associated proteins might help stabilize positioning of ribosome-bound tRNAs. The protein is Large ribosomal subunit protein uL5 of Mycoplasmopsis synoviae (strain 53) (Mycoplasma synoviae).